We begin with the raw amino-acid sequence, 170 residues long: Adenine phosphoribosyltransferase (170 aa).

It belongs to the purine/pyrimidine phosphoribosyltransferase family. As to quaternary structure, homodimer.

The protein resides in the cytoplasm. It carries out the reaction AMP + diphosphate = 5-phospho-alpha-D-ribose 1-diphosphate + adenine. It functions in the pathway purine metabolism; AMP biosynthesis via salvage pathway; AMP from adenine: step 1/1. Its function is as follows. Catalyzes a salvage reaction resulting in the formation of AMP, that is energically less costly than de novo synthesis. This Thermosynechococcus vestitus (strain NIES-2133 / IAM M-273 / BP-1) protein is Adenine phosphoribosyltransferase.